We begin with the raw amino-acid sequence, 125 residues long: Cystatin-like cysteine protease inhibitor EPIC2A (125 aa).

The first 21 residues, 1 to 21 (MSFLRPTLALLAVTALVTTSA), serve as a signal peptide directing secretion. Asn-45 is a glycosylation site (N-linked (GlcNAc...) asparagine). The Secondary area of contact motif lies at 68–72 (QVVSG).

Belongs to the cystatin family.

It localises to the secreted. Its function is as follows. Secreted effector that interacts with and inhibits host apoplastic pathogenesis-related papain-like cysteine proteases. Inhibition of host proteases by a pathogen extracellular protease inhibitor forms a specific type of defense-counterdefense mechanism between plants and microbial pathogens. The protein is Cystatin-like cysteine protease inhibitor EPIC2A of Phytophthora infestans (strain T30-4) (Potato late blight agent).